The primary structure comprises 248 residues: Granulin (248 aa).

Belongs to the polyhedrin family.

In terms of biological role, component of the virus occlusion bodies, which are large proteinaceous structures, that protect the virus from the outside environment for extended periods until they are ingested by insect larvae. This is Granulin from Choristoneura fumiferana (Spruce budworm moth).